The chain runs to 332 residues: Biotin synthase (332 aa).

A Radical SAM core domain is found at 46 to 275 (YYGKKVKLNM…SKEIRISGGR (230 aa)). [4Fe-4S] cluster is bound by residues C64, C68, and C71. Positions 108, 140, 200, and 270 each coordinate [2Fe-2S] cluster.

The protein belongs to the radical SAM superfamily. Biotin synthase family. In terms of assembly, homodimer. The cofactor is [4Fe-4S] cluster. [2Fe-2S] cluster is required as a cofactor.

It carries out the reaction (4R,5S)-dethiobiotin + (sulfur carrier)-SH + 2 reduced [2Fe-2S]-[ferredoxin] + 2 S-adenosyl-L-methionine = (sulfur carrier)-H + biotin + 2 5'-deoxyadenosine + 2 L-methionine + 2 oxidized [2Fe-2S]-[ferredoxin]. The protein operates within cofactor biosynthesis; biotin biosynthesis; biotin from 7,8-diaminononanoate: step 2/2. Catalyzes the conversion of dethiobiotin (DTB) to biotin by the insertion of a sulfur atom into dethiobiotin via a radical-based mechanism. The protein is Biotin synthase of Lysinibacillus sphaericus (Bacillus sphaericus).